The sequence spans 647 residues: Shugoshin-2 (647 aa).

S7 carries the post-translational modification Phosphoserine. Coiled coils occupy residues 28–87 (SKAQ…FHEE) and 125–145 (DEES…HDVS). The interval 171 to 295 (REANVFSDTQ…DTVIQSTPTK (125 aa)) is disordered. Low complexity predominate over residues 200-210 (NLSNSKPVNNN). Position 240 is a phosphoserine (S240). Polar residues-rich tracts occupy residues 242 to 253 (KSLSNKINNQAA) and 282 to 293 (RIQSDTVIQSTP). T292 carries the post-translational modification Phosphothreonine. A phosphoserine mark is found at S332 and S335. Composition is skewed to polar residues over residues 375 to 396 (SLTS…NMTV) and 462 to 478 (EPPS…NNSP). 4 disordered regions span residues 375-416 (SLTS…DSSV), 453-486 (RNPP…SLQG), 522-579 (TNLK…ERKK), and 593-647 (RNFD…TLNL). Composition is skewed to basic and acidic residues over residues 528–541 (NEND…SRRE) and 593–602 (RNFDLPSDHV). The span at 621–647 (KTETANITSEAPTTSEVTLENSETLNL) shows a compositional bias: polar residues.

It belongs to the shugoshin family.

It is found in the chromosome. The protein localises to the centromere. Involved in chromosome cohesion during mitosis and meiosis by preventing premature dissociation of cohesin complex from centromeres after prophase, when most of cohesin complex dissociates from chromosomes arms. Required for faithful mitotic chromosome segregation and proper kinetochore orientation during meiosis I. In contrast to sgo1, it is dispensable for centromeric protection of rec8 during meiosis I as well as protection of rad21 during mitosis. Required to sense the lack of tension at centromeres during mitosis. The protein is Shugoshin-2 (sgo2) of Schizosaccharomyces pombe (strain 972 / ATCC 24843) (Fission yeast).